The sequence spans 439 residues: Phthalate 4,5-dioxygenase oxygenase subunit (439 aa).

Residues tryptophan 27–alanine 134 enclose the Rieske domain. Positions 70, 72, 89, and 92 each coordinate [2Fe-2S] cluster. Residues histidine 181 and histidine 186 each coordinate Fe cation.

Belongs to the bacterial ring-hydroxylating dioxygenase alpha subunit family. In terms of assembly, this dioxygenase system consists of two proteins: phthalate oxygenase and phthalate oxygenase reductase. The cofactor is [2Fe-2S] cluster. Fe cation serves as cofactor.

It carries out the reaction phthalate + NADH + O2 + H(+) = cis-4,5-dihydroxycyclohexa-2,6-diene-1,2-dicarboxylate + NAD(+). Its pathway is xenobiotic degradation; phthalate degradation; 3,4-dihydroxybenzoate from phthalate: step 1/3. This Pseudomonas putida (Arthrobacter siderocapsulatus) protein is Phthalate 4,5-dioxygenase oxygenase subunit (pht3).